Here is a 370-residue protein sequence, read N- to C-terminus: tRNA-specific 2-thiouridylase MnmA (370 aa).

Residues Gly8–Ser15 and Met34 each bind ATP. The interval Asn104 to Asp106 is interaction with target base in tRNA. The active-site Nucleophile is Cys109. Cysteines 109 and 202 form a disulfide. Residue Gly134 coordinates ATP. The segment at Lys152–Gln154 is interaction with tRNA. Cys202 acts as the Cysteine persulfide intermediate in catalysis. Positions Arg309–Tyr310 are interaction with tRNA.

The protein belongs to the MnmA/TRMU family.

It localises to the cytoplasm. The enzyme catalyses S-sulfanyl-L-cysteinyl-[protein] + uridine(34) in tRNA + AH2 + ATP = 2-thiouridine(34) in tRNA + L-cysteinyl-[protein] + A + AMP + diphosphate + H(+). Functionally, catalyzes the 2-thiolation of uridine at the wobble position (U34) of tRNA, leading to the formation of s(2)U34. The polypeptide is tRNA-specific 2-thiouridylase MnmA (Metamycoplasma arthritidis (strain 158L3-1) (Mycoplasma arthritidis)).